The primary structure comprises 288 residues: MAGAKEIRTKIASVRNTQKITKAMEMVAASKMRKTQERMSASRPYSDAIRKVISHIAKGSIDYKHPFLTEREVKKVGFIVVSTDRGLCGGLNINLFKTVLNELKTRKDKGVDSVLGLVGNKAVSFFQSMGVEIKAQVTGLGDTPAMEDLVGIVNGMIENYRNGEVDEVYIIYNRFVNTMSQKPTVQKLLPLPELEDDDLENKGSWDYIYEPNPKVLLDSLLVRYLESQVYQAIVDNLASEQAARMVAMKAATDNAGNLINELQLVYNKARQASITNELNEIVAGAAAI.

The protein belongs to the ATPase gamma chain family. As to quaternary structure, F-type ATPases have 2 components, CF(1) - the catalytic core - and CF(0) - the membrane proton channel. CF(1) has five subunits: alpha(3), beta(3), gamma(1), delta(1), epsilon(1). CF(0) has three main subunits: a, b and c.

It localises to the cell inner membrane. Its function is as follows. Produces ATP from ADP in the presence of a proton gradient across the membrane. The gamma chain is believed to be important in regulating ATPase activity and the flow of protons through the CF(0) complex. The protein is ATP synthase gamma chain of Glaesserella parasuis serovar 5 (strain SH0165) (Haemophilus parasuis).